Reading from the N-terminus, the 73-residue chain is Antimicrobial peptide TsAP-1 (73 aa).

An N-terminal signal peptide occupies residues 1–22 (MQIKHLITLFFLVLIVADQCSA). The residue at position 39 (K39) is a Lysine amide. Positions 45 to 73 (EISAQIEQYKDLQKREAELEELLDRLPMY) are excised as a propeptide.

As to expression, expressed by the venom gland.

It localises to the secreted. Functionally, has a low antimicrobial activity against S.aureus, E.coli, and C.albicans (MICs 120-160 uM). Has a low hemolytic activity (4% at 160 uM). Also inhibits the growth of two cancer cell lines on a total of five (the squamous carcinoma cell line H157 (IC(50)=55.9 uM) and the lung adenocarcinoma cell line H838 (IC(50)=52.5 uM)). This Tityus serrulatus (Brazilian scorpion) protein is Antimicrobial peptide TsAP-1.